The chain runs to 486 residues: UDP-N-acetylmuramoyl-L-alanyl-D-glutamate--2,6-diaminopimelate ligase (486 aa).

UDP-N-acetyl-alpha-D-muramoyl-L-alanyl-D-glutamate is bound at residue serine 34. Glycine 112–serine 118 provides a ligand contact to ATP. UDP-N-acetyl-alpha-D-muramoyl-L-alanyl-D-glutamate contacts are provided by residues threonine 154–threonine 155, serine 181, glutamine 187, and arginine 189. Lysine 221 is modified (N6-carboxylysine). Residues arginine 385, aspartate 409 to arginine 412, glycine 457, and glutamate 461 each bind meso-2,6-diaminopimelate. The Meso-diaminopimelate recognition motif motif lies at aspartate 409–arginine 412.

Belongs to the MurCDEF family. MurE subfamily. Mg(2+) serves as cofactor. Post-translationally, carboxylation is probably crucial for Mg(2+) binding and, consequently, for the gamma-phosphate positioning of ATP.

The protein resides in the cytoplasm. It catalyses the reaction UDP-N-acetyl-alpha-D-muramoyl-L-alanyl-D-glutamate + meso-2,6-diaminopimelate + ATP = UDP-N-acetyl-alpha-D-muramoyl-L-alanyl-gamma-D-glutamyl-meso-2,6-diaminopimelate + ADP + phosphate + H(+). The protein operates within cell wall biogenesis; peptidoglycan biosynthesis. In terms of biological role, catalyzes the addition of meso-diaminopimelic acid to the nucleotide precursor UDP-N-acetylmuramoyl-L-alanyl-D-glutamate (UMAG) in the biosynthesis of bacterial cell-wall peptidoglycan. This Rhizobium meliloti (strain 1021) (Ensifer meliloti) protein is UDP-N-acetylmuramoyl-L-alanyl-D-glutamate--2,6-diaminopimelate ligase.